We begin with the raw amino-acid sequence, 446 residues long: Exodeoxyribonuclease 7 large subunit (446 aa).

This sequence belongs to the XseA family. In terms of assembly, heterooligomer composed of large and small subunits.

It is found in the cytoplasm. The enzyme catalyses Exonucleolytic cleavage in either 5'- to 3'- or 3'- to 5'-direction to yield nucleoside 5'-phosphates.. In terms of biological role, bidirectionally degrades single-stranded DNA into large acid-insoluble oligonucleotides, which are then degraded further into small acid-soluble oligonucleotides. The polypeptide is Exodeoxyribonuclease 7 large subunit (Streptococcus pneumoniae (strain Hungary19A-6)).